The primary structure comprises 217 residues: 3-demethoxyubiquinol 3-hydroxylase (217 aa).

Fe cation-binding residues include Glu66, Glu96, His99, Glu148, Glu180, and His183.

The protein belongs to the COQ7 family. Requires Fe cation as cofactor.

It is found in the cell membrane. The enzyme catalyses a 5-methoxy-2-methyl-3-(all-trans-polyprenyl)benzene-1,4-diol + AH2 + O2 = a 3-demethylubiquinol + A + H2O. It participates in cofactor biosynthesis; ubiquinone biosynthesis. Functionally, catalyzes the hydroxylation of 2-nonaprenyl-3-methyl-6-methoxy-1,4-benzoquinol during ubiquinone biosynthesis. In Ralstonia pickettii (strain 12J), this protein is 3-demethoxyubiquinol 3-hydroxylase.